A 335-amino-acid polypeptide reads, in one-letter code: Glycerol-3-phosphate dehydrogenase [NAD(P)+] (335 aa).

NADPH-binding residues include Trp-14, Arg-33, and Lys-111. Positions 111, 140, and 142 each coordinate sn-glycerol 3-phosphate. Ala-144 is a binding site for NADPH. Residues Lys-195, Asp-248, Ser-258, Arg-259, and Asn-260 each contribute to the sn-glycerol 3-phosphate site. Lys-195 acts as the Proton acceptor in catalysis. Arg-259 serves as a coordination point for NADPH. Val-283 and Glu-285 together coordinate NADPH.

The protein belongs to the NAD-dependent glycerol-3-phosphate dehydrogenase family.

It localises to the cytoplasm. It carries out the reaction sn-glycerol 3-phosphate + NAD(+) = dihydroxyacetone phosphate + NADH + H(+). The enzyme catalyses sn-glycerol 3-phosphate + NADP(+) = dihydroxyacetone phosphate + NADPH + H(+). Its pathway is membrane lipid metabolism; glycerophospholipid metabolism. In terms of biological role, catalyzes the reduction of the glycolytic intermediate dihydroxyacetone phosphate (DHAP) to sn-glycerol 3-phosphate (G3P), the key precursor for phospholipid synthesis. In Burkholderia mallei (strain NCTC 10247), this protein is Glycerol-3-phosphate dehydrogenase [NAD(P)+].